The chain runs to 202 residues: Large ribosomal subunit protein bL25 (202 aa).

This sequence belongs to the bacterial ribosomal protein bL25 family. CTC subfamily. Part of the 50S ribosomal subunit; part of the 5S rRNA/L5/L18/L25 subcomplex. Contacts the 5S rRNA. Binds to the 5S rRNA independently of L5 and L18.

Its function is as follows. This is one of the proteins that binds to the 5S RNA in the ribosome where it forms part of the central protuberance. This Methylococcus capsulatus (strain ATCC 33009 / NCIMB 11132 / Bath) protein is Large ribosomal subunit protein bL25.